A 185-amino-acid chain; its full sequence is Small ribosomal subunit protein uS5c (185 aa).

The region spanning 26–89 (FVERLIKISR…ADGRKNLIKI (64 aa)) is the S5 DRBM domain.

It belongs to the universal ribosomal protein uS5 family. Part of the 30S ribosomal subunit. Contacts protein S4.

The protein localises to the plastid. Its subcellular location is the chloroplast. With S4 and S12 plays an important role in translational accuracy. This chain is Small ribosomal subunit protein uS5c (rps5), found in Trieres chinensis (Marine centric diatom).